Reading from the N-terminus, the 348-residue chain is Calcium/calmodulin-dependent protein kinase type 1 (348 aa).

The short motif at 7–22 (RDGSGPAPNATIREKY) is the Nuclear localization signal 1 element. The 257-residue stretch at 22 to 278 (YDFRDVLGTG…CQDALSHPWI (257 aa)) folds into the Protein kinase domain. Residues 28 to 36 (LGTGAFSKV) and Lys52 contribute to the ATP site. A Nuclear localization signal 2 motif is present at residues 71–78 (KVLRKLRH). Asp144 acts as the Proton acceptor in catalysis. At Thr179 the chain carries Phosphothreonine; by ckk-1. The interval 278–318 (ISGNTAYTHDIHGTVAVHLKKSLAKRNWKKAYNAAAAIRQL) is autoinhibitory domain. Residues 288 to 294 (IHGTVAV) carry the Nuclear export sequence motif. The short motif at 297 to 307 (KKSLAKRNWKK) is the Nuclear localization signal 3 element. The tract at residues 298–319 (KSLAKRNWKKAYNAAAAIRQLQ) is calmodulin-binding. Over residues 327–338 (SNRLQKQASQQQ) the composition is skewed to polar residues. Residues 327-348 (SNRLQKQASQQQPEPPTPAFHA) form a disordered region. A compositionally biased stretch (pro residues) spans 339 to 348 (PEPPTPAFHA).

This sequence belongs to the protein kinase superfamily. CAMK Ser/Thr protein kinase family. CaMK subfamily. In terms of assembly, interacts with importin ima-3; affinity for ima-3 is increased in the presence of Ca(2+) and calmodulin and leads to increased nuclear accumulation of cmk-1 in FLP neurons upon prolonged heat activation. Mg(2+) is required as a cofactor. Post-translationally, phosphorylation at Thr-179 can promote both nuclear export and import, sustaining nucleocytoplasmic shuttling. In terms of tissue distribution, expressed in head and tail neurons and vulval muscles. Throughout the nervous system. Detected in neurites and neuronal cell bodies. Expressed in the mechanosensory neurons, AVM and ALM, and in the interneurons, AVA, AVB and AVD. Expressed in the right and left ASE neurons where it functions cell-autonomously to control salt-avoidance learning. Expressed in FLP and AFD thermosensory neurons.

The protein localises to the nucleus. It is found in the cytoplasm. The enzyme catalyses L-seryl-[protein] + ATP = O-phospho-L-seryl-[protein] + ADP + H(+). It catalyses the reaction L-threonyl-[protein] + ATP = O-phospho-L-threonyl-[protein] + ADP + H(+). With respect to regulation, activated by Ca(2+)/calmodulin. Binding of calmodulin results in a conformational change that generates functional binding sites for both substrate and ATP, and thus relieves autoinhibition and lowers the Km of substrate binding. Must be phosphorylated by ckk-1 to be maximally active but this does not appear to be required for activity in AFD neurons. Its function is as follows. Calcium/calmodulin-dependent protein kinase that operates in the calcium-triggered CaMKK-CaMK1 signaling cascade which results in transcriptional activation. Transcriptional activation occurs at least in part through phosphorylation of crh-1. Regulates gene expression, sensory morphology, and function of the AFD thermosensory neurons. Involved in long-term adaptation of AFD neurons to temperatures warmer than the initial acclimatized cultivation temperature. Acts in the FLP thermal nociceptors to moderate the responsiveness to noxious heat and controls neuropeptide release from FLP neurons in response to temperature elevations. Regulates the dauer decision, the decision of the larvae to enter into the alternative stress-resistant and long-lived dauer developmental stage, based on the feeding state, primarily in the AWC sensory neurons. Acts non cell-autonomously in the AWC neurons to regulate expression of the daf-28 insulin-like peptide and cell-autonomously in the ASI sensory neurons to regulate expression of the growth promoting daf-7 in a food-regulated manner. Plays a role in memory-based thermal response of an individual AFD neuron cell. Influences habituation and sensitivity to repeated mechanosensory stimuli. Involved in chemotaxis response in AWC neurons to attractant 2-heptanone, a volatile organic compound emitted by the nematode pathogenic bacterium B.nematocida B16. Acts in the ASE salt-sensing neurons to promote a type of aversive gustatory-associated learning called salt-avoidance learning via regulation of crh-1 signaling and the promotion of long-term memory formation, but is not involved in salt attraction. Represses transcription of glutamate receptor glr-1 in the nucleus basally and in response to changes in synaptic activity. In Caenorhabditis elegans, this protein is Calcium/calmodulin-dependent protein kinase type 1.